Here is a 514-residue protein sequence, read N- to C-terminus: Peptide chain release factor 3 (514 aa).

The region spanning Lys-8–His-268 is the tr-type G domain. GTP-binding positions include Ser-17–Thr-24, Asp-85–His-89, and Asn-139–Asp-142.

This sequence belongs to the TRAFAC class translation factor GTPase superfamily. Classic translation factor GTPase family. PrfC subfamily.

It localises to the cytoplasm. In terms of biological role, increases the formation of ribosomal termination complexes and stimulates activities of RF-1 and RF-2. It binds guanine nucleotides and has strong preference for UGA stop codons. It may interact directly with the ribosome. The stimulation of RF-1 and RF-2 is significantly reduced by GTP and GDP, but not by GMP. In Streptococcus pyogenes serotype M2 (strain MGAS10270), this protein is Peptide chain release factor 3.